Reading from the N-terminus, the 153-residue chain is Ribosome maturation factor RimP (153 aa).

This sequence belongs to the RimP family.

The protein localises to the cytoplasm. Required for maturation of 30S ribosomal subunits. The protein is Ribosome maturation factor RimP of Nostoc sp. (strain PCC 7120 / SAG 25.82 / UTEX 2576).